The primary structure comprises 506 residues: Maturase K (506 aa).

This sequence belongs to the intron maturase 2 family. MatK subfamily.

It is found in the plastid. The protein resides in the chloroplast. In terms of biological role, usually encoded in the trnK tRNA gene intron. Probably assists in splicing its own and other chloroplast group II introns. The polypeptide is Maturase K (Trifolium microcephalum (Small-head clover)).